The following is a 112-amino-acid chain: uncharacterized protein (112 aa).

Residues 62–82 (THSFIFFILFLFIFIFLTFSH) form a helical membrane-spanning segment.

It is found in the membrane. This is an uncharacterized protein from Saccharomyces cerevisiae (strain ATCC 204508 / S288c) (Baker's yeast).